Consider the following 1129-residue polypeptide: SMC5-SMC6 complex localization factor protein 2 (1129 aa).

Disordered regions lie at residues V71–N178, N312–A343, and M955–G1057. Residues K72–P87 show a composition bias toward basic residues. Positions L93 to P110 are enriched in polar residues. 2 stretches are compositionally biased toward basic and acidic residues: residues Q112–L130 and R149–V166. 2 stretches are compositionally biased toward polar residues: residues Q169–N178 and T324–A343. Composition is skewed to acidic residues over residues E999–W1014 and S1033–S1048.

This sequence belongs to the FAM178 family.

It localises to the nucleus. In terms of biological role, plays a role in the DNA damage response (DDR) pathway by regulating postreplication repair of UV-damaged DNA and genomic stability maintenance. Promotes the recruitment of the SMC5-SMC6 complex to DNA lesions. This Danio rerio (Zebrafish) protein is SMC5-SMC6 complex localization factor protein 2 (slf2).